Reading from the N-terminus, the 303-residue chain is Small ribosomal subunit protein uS2 (303 aa).

The interval 267 to 303 is disordered; the sequence is AESLSMAEEPAPPSQRKGPASETAEPVAEPAVTESGS.

It belongs to the universal ribosomal protein uS2 family.

This chain is Small ribosomal subunit protein uS2, found in Solibacter usitatus (strain Ellin6076).